We begin with the raw amino-acid sequence, 110 residues long: Iron-sulfur cluster insertion protein ErpA (110 aa).

3 residues coordinate iron-sulfur cluster: cysteine 38, cysteine 102, and cysteine 104.

Belongs to the HesB/IscA family. As to quaternary structure, homodimer. The cofactor is iron-sulfur cluster.

Functionally, required for insertion of 4Fe-4S clusters for at least IspG. This Marinobacter nauticus (strain ATCC 700491 / DSM 11845 / VT8) (Marinobacter aquaeolei) protein is Iron-sulfur cluster insertion protein ErpA.